The chain runs to 147 residues: Peptide deformylase (147 aa).

Fe cation contacts are provided by cysteine 88 and histidine 130. Glutamate 131 is an active-site residue. Position 134 (histidine 134) interacts with Fe cation.

Belongs to the polypeptide deformylase family. Fe(2+) serves as cofactor.

It catalyses the reaction N-terminal N-formyl-L-methionyl-[peptide] + H2O = N-terminal L-methionyl-[peptide] + formate. Its function is as follows. Removes the formyl group from the N-terminal Met of newly synthesized proteins. Requires at least a dipeptide for an efficient rate of reaction. N-terminal L-methionine is a prerequisite for activity but the enzyme has broad specificity at other positions. The sequence is that of Peptide deformylase from Clostridium botulinum (strain Alaska E43 / Type E3).